A 654-amino-acid chain; its full sequence is MASLASSQTEPNTSESPVPASMFSPEPDGEDSDCSLDGEPLRNGEADIDVTSKFVLVSPSAEQYDSLLHQLRDRMDEGRGETIYVIGQGSDGTEYGLNEADMEASVATVTSMAEQIVADMILLREHQEAGGKVQDYLVRKSVGDNDFLEVRVAVVGNVDAGKSTLLGVLTHGELDNGRGFARQKLFRHKHEIESGRTSSVGNDILGFDNHGQVVNKPDNHGGSLEWTKICEKSSKIITFIDLAGHEKYLKTTVFGMTGHLPDFCMLMVGSNAGIVGMTKEHLGLALALNVPVFVVVTKIDMCPANILQETLKLLQRLLKSPGCRKIPVLVQNKDDVIVTASNFSSERMCPIFQISNVTGENLDLLKMFLNLLSPRSSSREEEPAEFQIDDTYSVPGVGTVVSGTTLRGLIKLNDLLLLGPDPLGNFTSIAVKSIHRKRMPVKEVRGGQTASFALKKIKRSTIRKGMVMVSPRLNPQASWEFEAEILVLHHPTTISPRYQAMVHCGSIRQTATILTMSRDCLRTGDKAIVHFRFIKTPEYLHIDQRLVFREGRTKAVGTITKLLQSTNNLPMNSKPPQQVKMQSTKKSLHGKKDEQSPAAAVTEEASPSAAAIGVTAGAGAMQAQPKTGGGGRRRGGQRHKVKAQGACTASTGGC.

Positions 1 to 16 are enriched in polar residues; the sequence is MASLASSQTEPNTSES. The segment at 1 to 44 is disordered; the sequence is MASLASSQTEPNTSESPVPASMFSPEPDGEDSDCSLDGEPLRNG. A compositionally biased stretch (acidic residues) spans 27–36; it reads PDGEDSDCSL. One can recognise a tr-type G domain in the interval 147 to 377; that stretch reads FLEVRVAVVG…FLNLLSPRSS (231 aa). Residues 156-163 are G1; sequence GNVDAGKS. 156-163 contributes to the GTP binding site; the sequence is GNVDAGKS. The G2 stretch occupies residues 195–199; that stretch reads GRTSS. The G3 stretch occupies residues 241-244; that stretch reads DLAG. Residues 241-245 and 297-300 each bind GTP; these read DLAGH and TKID. Residues 297–300 are G4; that stretch reads TKID. The interval 355–357 is G5; the sequence is SNV. Residues 566–585 are compositionally biased toward polar residues; sequence TNNLPMNSKPPQQVKMQSTK. Positions 566-654 are disordered; the sequence is TNNLPMNSKP…GACTASTGGC (89 aa). Over residues 609 to 620 the composition is skewed to low complexity; it reads AAAIGVTAGAGA. The segment covering 631-642 has biased composition (basic residues); that stretch reads GRRRGGQRHKVK.

Belongs to the TRAFAC class translation factor GTPase superfamily. Classic translation factor GTPase family. GTPBP1 subfamily.

It localises to the cytoplasm. In terms of biological role, promotes degradation of target mRNA species. Plays a role in the regulation of circadian mRNA stability. Binds GTP and has GTPase activity. The polypeptide is GTP-binding protein 1 (gtpbp1) (Xenopus laevis (African clawed frog)).